Reading from the N-terminus, the 114-residue chain is Replication initiation control protein YabA (114 aa).

The Zn(2+) site is built by His-79, Cys-81, Cys-95, and Cys-98.

This sequence belongs to the YabA family. In terms of assembly, homotetramer. Interacts with both DnaA and DnaN, acting as a bridge between these two proteins. The cofactor is Zn(2+).

The protein resides in the cytoplasm. Its subcellular location is the nucleoid. Involved in control of chromosome replication initiation. Inhibits the cooperative binding of DnaA to the oriC region, thus negatively regulating initiation of chromosome replication. Inhibits the ability of DnaA-ATP to form a helix on DNA; does not disassemble preformed DnaA-DNA helices. Decreases the residence time of DnaA on the chromosome at its binding sites (oriC, replication forks and promoter-binding sites). Tethers DnaA to the replication machinery via the DNA polymerase beta sliding clamp subunit (dnaN). Associates with oriC and other DnaA targets on the chromosome in a DnaA-dependent manner. This is Replication initiation control protein YabA from Lactobacillus johnsonii (strain CNCM I-12250 / La1 / NCC 533).